Consider the following 377-residue polypeptide: Guanine nucleotide-binding protein subunit beta (377 aa).

WD repeat units follow at residues 63–93 (GHTG…IVWN), 105–135 (LPCA…SIFN), 154–185 (GHKG…VLWD), 202–233 (GHTA…RLWD), 246–276 (GHES…RLFD), 293–323 (GDIP…YVWD), and 339–369 (SHEG…KIWA).

The protein belongs to the WD repeat G protein beta family. G proteins are composed of 3 units, alpha, beta and gamma.

In terms of biological role, guanine nucleotide-binding proteins (G proteins) are involved as a modulator or transducer in various transmembrane signaling systems. The beta and gamma chains are required for the GTPase activity, for replacement of GDP by GTP, and for G protein-effector interaction. This is Guanine nucleotide-binding protein subunit beta (GB1) from Solanum tuberosum (Potato).